Consider the following 208-residue polypeptide: Probable GTP-binding protein EngB (208 aa).

An EngB-type G domain is found at 23 to 205 (LTSEMVILGR…RQTLLKYLLT (183 aa)). GTP-binding positions include 31 to 38 (GRSNVGKS), 57 to 61 (GKTRL), 84 to 87 (DLPG), 154 to 157 (TKFD), and 182 to 184 (FNA). Residues serine 38 and threonine 59 each contribute to the Mg(2+) site.

This sequence belongs to the TRAFAC class TrmE-Era-EngA-EngB-Septin-like GTPase superfamily. EngB GTPase family. Mg(2+) serves as cofactor.

Necessary for normal cell division and for the maintenance of normal septation. This chain is Probable GTP-binding protein EngB, found in Helicobacter pylori (strain J99 / ATCC 700824) (Campylobacter pylori J99).